Consider the following 463-residue polypeptide: Glycine--tRNA ligase (463 aa).

Positions 100 and 175 each coordinate substrate. Residues 207 to 209, 217 to 222, 291 to 292, and 335 to 338 contribute to the ATP site; these read RNE, FRTREF, EL, and GADR. 222 to 226 contributes to the substrate binding site; that stretch reads FEQME. A substrate-binding site is contributed by 331-335; sequence EPSLG.

The protein belongs to the class-II aminoacyl-tRNA synthetase family. In terms of assembly, homodimer.

It localises to the cytoplasm. It carries out the reaction tRNA(Gly) + glycine + ATP = glycyl-tRNA(Gly) + AMP + diphosphate. Functionally, catalyzes the attachment of glycine to tRNA(Gly). The protein is Glycine--tRNA ligase of Clostridium tetani (strain Massachusetts / E88).